The chain runs to 780 residues: Cullin-5 (780 aa).

At Ser-34 the chain carries Phosphoserine. Thr-210 carries the post-translational modification Phosphothreonine. Residues Arg-711–Asp-772 form the Cullin neddylation domain. A Glycyl lysine isopeptide (Lys-Gly) (interchain with G-Cter in NEDD8) cross-link involves residue Lys-724.

The protein belongs to the cullin family. In terms of assembly, component of multiple cullin-5-RING E3 ubiquitin-protein ligase complexes (ECS complexes, also named CRL5 complexes) formed of CUL5, Elongin BC (ELOB and ELOC), RNF7/RBX2 and a variable SOCS box domain-containing protein as substrate-specific recognition component. CUL5-containing ECS complexes specifically contain RNF7/RBX2, and not RBX1, as catalytic subunit. Component of the ECS(ASB2) complex with the substrate recognition component ASB2. Component of the ECS(ASB6) complex with the substrate recognition component ASB6. Component of the ECS(ASB7) complex with the substrate recognition component ASB7. Component of the ECS(ASB9) complex with the substrate recognition component ASB9. Component of the ECS(ASB11) complex with the substrate recognition component ASB11. Component of the ECS(ASB12) complex with the substrate recognition component ASB12. Component of the ECS(LRRC41) complex with the substrate recognition component LRRC41. Component of the ECS(SOCS1) complex with the substrate recognition component SOCS1. Component of the ECS(SOCS2) complex with the substrate recognition component SOCS2. Component of the ECS(WSB1) complex with the substrate recognition subunit WSB1. Component of the ECS(SOCS3) complex with the substrate recognition component SOCS3. Component of the ECS(SOCS7) complex with the substrate recognition component SOCS7. Component of the ECS(SPSB1) complex with the substrate recognition component SPSB1. Component of the ECS(SPSB3) complex with the substrate recognition component SPSB3. Component of the ECS(SPSB2) complex with the substrate recognition component SPSB2. Component of the ECS(SPSB4) complex with the substrate recognition component SPSB4. Component of the ECS(RAB40) complex with the substrate recognition subunit RAB40A, RAB40B or RAB40C. Component of the ECS(KLHDC1) complex with the substrate recognition component KLHDC1. Component of the ECS(PCMTD1) complex with the substrate recognition subunit PCMTD1. May also form complexes containing RBX1 and ELOA or VHL; additional evidence is however required to confirm this result in vivo. Interacts (when neddylated) with ARIH2; leading to activate the E3 ligase activity of ARIH2. Interacts with ERCC6; the interaction is induced by DNA damaging agents or inhibitors of RNA polymerase II elongation. Interacts with ELOA (via the BC-box). Interacts (unneddylated form) with DCUN1D1, DCUN1D2, DCUN1D3, DCUN1D4 and DCUN1D5; these interactions promote the cullin neddylation. Post-translationally, neddylated; which enhances the ubiquitination activity of ECS complexes and prevents binding of the inhibitor CAND1. Deneddylated via its interaction with the COP9 signalosome (CSN).

It is found in the nucleus. It functions in the pathway protein modification; protein ubiquitination. Its function is as follows. Core component of multiple cullin-5-RING E3 ubiquitin-protein ligase complexes (ECS complexes, also named CRL5 complexes), which mediate the ubiquitination and subsequent proteasomal degradation of target proteins. Acts a scaffold protein that contributes to catalysis through positioning of the substrate and the ubiquitin-conjugating enzyme. The functional specificity of the E3 ubiquitin-protein ligase complex depends on the variable SOCS box-containing substrate recognition component. Acts as a key regulator of neuron positioning during cortex development: component of various SOCS-containing ECS complexes, such as the ECS(SOCS7) complex, that regulate reelin signaling by mediating ubiquitination and degradation of DAB1. ECS(SOCS1) seems to direct ubiquitination of JAK2. The ECS(SOCS2) complex mediates the ubiquitination and subsequent proteasomal degradation of phosphorylated EPOR and GHR. The ECS(SPSB3) complex catalyzes ubiquitination of nuclear CGAS. ECS(KLHDC1) complex is part of the DesCEND (destruction via C-end degrons) pathway and mediates ubiquitination and degradation of truncated SELENOS selenoprotein produced by failed UGA/Sec decoding, which ends with a glycine. The ECS(ASB9) complex mediates ubiquitination and degradation of CKB. As part of some ECS complex, promotes 'Lys-11'-linked ubiquitination and degradation of BTRC. As part of a multisubunit ECS complex, polyubiquitinates monoubiquitinated POLR2A. As part of the ECS(RAB40C) complex, mediates ANKRD28 ubiquitination and degradation, thereby regulating protein phosphatase 6 (PP6) complex activity and focal adhesion assembly during cell migration. As part of the ECS(RAB40A) complex, mediates RHOU 'Lys-48'-linked ubiquitination and degradation, thus inhibiting focal adhesion disassembly during cell migration. As part of the ECS(RAB40B) complex, mediates LIMA1/EPLIN and RAP2 ubiquitination, thereby regulating actin cytoskeleton dynamics and stress fiber formation during cell migration. May form a cell surface vasopressin receptor. The sequence is that of Cullin-5 from Pongo abelii (Sumatran orangutan).